Reading from the N-terminus, the 456-residue chain is Putative E3 ubiquitin-protein ligase XBAT31 (456 aa).

ANK repeat units follow at residues 45–74, 78–107, 112–141, 157–186, and 194–224; these read DRHSVLHVAAANGQIEILSLLLERFTNPDL, HKQTPLMLAAMYGRISCVKKLAEVGANILM, NRRTCLHYAAYYGHANCVQAILSAAQSSPV, KGATPLHLAARQRRPECVNVLLDSGSLVCA, and PGSTPLHLAARSGSIDCVRKLLAWGADRLQR. Residues 319 to 368 form an RING-type zinc finger; the sequence is CCICFEQVCTIEVKDCGHQMCAQCTLALCCHNKPNPTTSTVTPPVCPFCR.

It carries out the reaction S-ubiquitinyl-[E2 ubiquitin-conjugating enzyme]-L-cysteine + [acceptor protein]-L-lysine = [E2 ubiquitin-conjugating enzyme]-L-cysteine + N(6)-ubiquitinyl-[acceptor protein]-L-lysine.. Its pathway is protein modification; protein ubiquitination. Its function is as follows. No E3 ubiquitin-protein ligase activity observed when associated with the E2 enzyme UBC8 in vitro. The chain is Putative E3 ubiquitin-protein ligase XBAT31 (XBAT31) from Arabidopsis thaliana (Mouse-ear cress).